The chain runs to 705 residues: Dolichyl-diphosphooligosaccharide--protein glycosyltransferase subunit STT3A (705 aa).

Over 1 to 17 (MTKFGFLRLSYEKQDTL) the chain is Cytoplasmic. Residues 18 to 38 (LKLLILSMAAVLSFSTRLFAV) form a helical membrane-spanning segment. Over 39 to 119 (LRFESVIHEF…IDIRNVCVFL (81 aa)) the chain is Lumenal. Residues 47 to 49 (EFD) carry the DXD motif 1 motif. Aspartate 49 lines the Mn(2+) pocket. Residues 120–138 (APLFSSFTTIVTYHLTKEL) form a helical membrane-spanning segment. Residues 139–140 (KD) are Cytoplasmic-facing. A helical transmembrane segment spans residues 141–158 (AGAGLLAAAMIAVVPGYI). Residues 159-169 (SRSVAGSYDNE) lie on the Lumenal side of the membrane. Residues aspartate 167 and glutamate 169 each coordinate Mn(2+). Residues 167–169 (DNE) carry the DXD motif 2 motif. A helical membrane pass occupies residues 170–189 (GIAIFCMLLTYYMWIKAVKT). Topologically, residues 190–191 (GS) are cytoplasmic. The helical transmembrane segment at 192–206 (ICWAAKCALAYFYMV) threads the bilayer. Residues 207–211 (SSWGG) are Lumenal-facing. A helical transmembrane segment spans residues 212-228 (YVFLINLIPLHVLVLML). Residues 229-233 (TGRFS) are Cytoplasmic-facing. Residues 234–259 (HRIYVAYCTVYCLGTILSMQISFVGF) form a helical membrane-spanning segment. Over 260–267 (QPVLSSEH) the chain is Lumenal. Residues 268-287 (MAAFGVFGLCQIHAFVDYLR) form a helical membrane-spanning segment. Topologically, residues 288–300 (SKLNPQQFEVLFR) are cytoplasmic. A helical transmembrane segment spans residues 301–321 (SVISLVGFVLLTVGALLMLTG). Residues 322–356 (KISPWTGRFYSLLDPSYAKNNIPIIASVSEHQPTT) lie on the Lumenal side of the membrane. Residues 348–351 (SVSE) carry the SVSE motif motif. Residues 357–379 (WSSYYFDLQLLVFMFPVGLYYCF) traverse the membrane as a helical segment. Residues 380–385 (SNLSDA) lie on the Cytoplasmic side of the membrane. The helical transmembrane segment at 386-402 (RIFIIMYGVTSMYFSAV) threads the bilayer. Residues 403–406 (MVRL) are Lumenal-facing. Dolichyl diphosphooligosaccharide is bound at residue arginine 405. A helical transmembrane segment spans residues 407–428 (MLVLAPVMCILSGIGVSQVLST). The Cytoplasmic portion of the chain corresponds to 429–453 (YMKNLDISRPDKKSKKQQDSTYPIK). Residues 454 to 473 (NEVASGMILVMAFFLITYTF) traverse the membrane as a helical segment. At 474–705 (HSTWVTSEAY…DLDNRGLSRT (232 aa)) the chain is on the lumenal side. The segment at 525–527 (WWD) is interacts with target acceptor peptide in protein substrate. Residues 525 to 529 (WWDYG) carry the WWDYG motif motif. Tyrosine 530 serves as a coordination point for dolichyl diphosphooligosaccharide. Asparagine 537 and asparagine 544 each carry an N-linked (GlcNAc...) asparagine glycan. An N-linked (GlcNAc...) (high mannose) asparagine glycan is attached at asparagine 548. Positions 592–599 (DINKFLWM) match the DK motif motif.

It belongs to the STT3 family. In terms of assembly, component of the oligosaccharyltransferase (OST) complex. There are 2 OST complexes, OST-A and OST-B, which contain STT3A or STT3B as catalytic subunit, respectively. OST-A and OST-B contain common core subunits RPN1, RPN2, OST48, OST4, DAD1 and TMEM258, and OST-A contains DC2/OSTC and KRTCAP2/KCP2 specific accessory subunits. OST-A complex assembly occurs through the formation of 3 subcomplexes. Subcomplex 1 contains RPN1 and TMEM258, subcomplex 2 contains the OST-A-specific subunits STT3A, DC2/OSTC, and KCP2 as well as the core subunit OST4, and subcomplex 3 contains RPN2, DAD1, and OST48. The OST-A complex can form stable complexes with the Sec61 complex or with both the Sec61 and TRAP complexes. The cofactor is Mg(2+). It depends on Mn(2+) as a cofactor. Expressed at high levels in placenta, liver, muscle and pancreas, and at very low levels in brain, lung and kidney. Expressed in skin fibroblasts (at protein level).

It localises to the endoplasmic reticulum. The protein resides in the endoplasmic reticulum membrane. The enzyme catalyses a di-trans,poly-cis-dolichyl diphosphooligosaccharide + L-asparaginyl-[protein] = N(4)-(oligosaccharide-(1-&gt;4)-N-acetyl-beta-D-glucosaminyl-(1-&gt;4)-N-acetyl-beta-D-glucosaminyl)-L-asparaginyl-[protein] + a di-trans,poly-cis-dolichyl diphosphate + H(+). It functions in the pathway protein modification; protein glycosylation. With respect to regulation, STT3A, but not STT3B, is specifically inhibited by the N-glycosylation inhibitor NGI-235, which prevents productive binding pose of the glycan donor in the active site of STT3A. In terms of biological role, catalytic subunit of the oligosaccharyl transferase (OST) complex that catalyzes the initial transfer of a defined glycan (Glc(3)Man(9)GlcNAc(2) in eukaryotes) from the lipid carrier dolichol-pyrophosphate to an asparagine residue within an Asn-X-Ser/Thr consensus motif in nascent polypeptide chains, the first step in protein N-glycosylation. N-glycosylation occurs cotranslationally and the complex associates with the Sec61 complex at the channel-forming translocon complex that mediates protein translocation across the endoplasmic reticulum (ER). All subunits are required for a maximal enzyme activity. This subunit contains the active site and the acceptor peptide and donor lipid-linked oligosaccharide (LLO) binding pockets. STT3A is present in the majority of OST complexes and mediates cotranslational N-glycosylation of most sites on target proteins, while STT3B-containing complexes are required for efficient post-translational glycosylation and mediate glycosylation of sites that have been skipped by STT3A. STT3A-containing OST-A complex is also required to prevent hyperglycosylation of some target proteins by preventing glycosylation of facultative sites before folding of target proteins is completed. This Homo sapiens (Human) protein is Dolichyl-diphosphooligosaccharide--protein glycosyltransferase subunit STT3A.